The primary structure comprises 195 residues: Ras-related protein Rab-31 (195 aa).

The GTP site is built by G16, G18, K19, S20, S21, D32, and H33. S20 lines the Mg(2+) pocket. 2 short sequence motifs (switch) span residues 30–42 (HFDHNISPTIGAS) and 63–79 (AGQERFHSLAPMYYRGS). At S36 the chain carries Phosphoserine. Positions 38, 64, 119, 122, 150, and 151 each coordinate GTP. Mg(2+) is bound at residue T38. 2 S-geranylgeranyl cysteine lipidation sites follow: C194 and C195.

The protein belongs to the small GTPase superfamily. Rab family. As to quaternary structure, interacts (in GDP-bound form) with RIN3 and GAPVD1, which function as guanine exchange factors (GEF). Interacts (in GTP-bound form) with EEA1. Interacts with NGFR. Interacts with EGFR. Interacts with OCRL. Interacts (in GTP-bound form) with APPL2; interaction contributes to or enhances recruitment of APPL2 to the phagosomes; interaction enhances Fc-gamma receptor-mediated phagocytosis through PI3K/Akt signaling in macrophages. It depends on Mg(2+) as a cofactor. In terms of tissue distribution, detected in brain astrocytes, spleen and intestine (at protein level).

The protein resides in the early endosome. It is found in the golgi apparatus. It localises to the trans-Golgi network. The protein localises to the trans-Golgi network membrane. Its subcellular location is the cytoplasmic vesicle. The protein resides in the phagosome. It is found in the phagosome membrane. It catalyses the reaction GTP + H2O = GDP + phosphate + H(+). Regulated by guanine nucleotide exchange factors (GEFs) including RIN3 and GAPVD1 which promote the exchange of bound GDP for free GTP. Regulated by GTPase activating proteins (GAPs) which increase the GTP hydrolysis activity. Inhibited by GDP dissociation inhibitors (GDIs) which prevent Rab-GDP dissociation. Functionally, the small GTPases Rab are key regulators of intracellular membrane trafficking, from the formation of transport vesicles to their fusion with membranes. Rabs cycle between an inactive GDP-bound form and an active GTP-bound form that is able to recruit to membranes different set of downstream effectors directly responsible for vesicle formation, movement, tethering and fusion. Required for the integrity and for normal function of the Golgi apparatus and the trans-Golgi network. Plays a role in insulin-stimulated translocation of GLUT4 to the cell membrane. Plays a role in the maturation of phagosomes that engulf pathogens, such as S.aureus and Mycobacterium. Plays a role in M6PR transport from the trans-Golgi network to endosomes. Plays a role in the internalization of EGFR from the cell membrane into endosomes. The sequence is that of Ras-related protein Rab-31 from Rattus norvegicus (Rat).